A 406-amino-acid chain; its full sequence is Phosphopentomutase (406 aa).

6 residues coordinate Mn(2+): D10, D305, H310, D346, H347, and H358.

It belongs to the phosphopentomutase family. Mn(2+) serves as cofactor.

Its subcellular location is the cytoplasm. It catalyses the reaction 2-deoxy-alpha-D-ribose 1-phosphate = 2-deoxy-D-ribose 5-phosphate. The enzyme catalyses alpha-D-ribose 1-phosphate = D-ribose 5-phosphate. It participates in carbohydrate degradation; 2-deoxy-D-ribose 1-phosphate degradation; D-glyceraldehyde 3-phosphate and acetaldehyde from 2-deoxy-alpha-D-ribose 1-phosphate: step 1/2. Isomerase that catalyzes the conversion of deoxy-ribose 1-phosphate (dRib-1-P) and ribose 1-phosphate (Rib-1-P) to deoxy-ribose 5-phosphate (dRib-5-P) and ribose 5-phosphate (Rib-5-P), respectively. This chain is Phosphopentomutase, found in Aliivibrio fischeri (strain MJ11) (Vibrio fischeri).